The chain runs to 83 residues: Small ribosomal subunit protein eS21 (83 aa).

This sequence belongs to the eukaryotic ribosomal protein eS21 family. In terms of assembly, component of the 40S small ribosomal subunit.

It is found in the cytoplasm. It localises to the cytosol. The protein localises to the rough endoplasmic reticulum. Component of the small ribosomal subunit. The ribosome is a large ribonucleoprotein complex responsible for the synthesis of proteins in the cell. The chain is Small ribosomal subunit protein eS21 (rps21) from Xenopus laevis (African clawed frog).